Here is a 37-residue protein sequence, read N- to C-terminus: Cytochrome b6-f complex subunit 5 (37 aa).

A helical membrane pass occupies residues phenylalanine 5 to alanine 25.

Belongs to the PetG family. The 4 large subunits of the cytochrome b6-f complex are cytochrome b6, subunit IV (17 kDa polypeptide, PetD), cytochrome f and the Rieske protein, while the 4 small subunits are PetG, PetL, PetM and PetN. The complex functions as a dimer.

Its subcellular location is the plastid. The protein resides in the chloroplast thylakoid membrane. Functionally, component of the cytochrome b6-f complex, which mediates electron transfer between photosystem II (PSII) and photosystem I (PSI), cyclic electron flow around PSI, and state transitions. PetG is required for either the stability or assembly of the cytochrome b6-f complex. The protein is Cytochrome b6-f complex subunit 5 of Phalaenopsis aphrodite subsp. formosana (Moth orchid).